Reading from the N-terminus, the 756-residue chain is 1,4-alpha-glucan branching enzyme GlgB (756 aa).

Aspartate 425 serves as the catalytic Nucleophile. Residue glutamate 478 is the Proton donor of the active site.

This sequence belongs to the glycosyl hydrolase 13 family. GlgB subfamily. As to quaternary structure, monomer.

It carries out the reaction Transfers a segment of a (1-&gt;4)-alpha-D-glucan chain to a primary hydroxy group in a similar glucan chain.. It participates in glycan biosynthesis; glycogen biosynthesis. In terms of biological role, catalyzes the formation of the alpha-1,6-glucosidic linkages in glycogen by scission of a 1,4-alpha-linked oligosaccharide from growing alpha-1,4-glucan chains and the subsequent attachment of the oligosaccharide to the alpha-1,6 position. The polypeptide is 1,4-alpha-glucan branching enzyme GlgB (Cupriavidus necator (strain ATCC 17699 / DSM 428 / KCTC 22496 / NCIMB 10442 / H16 / Stanier 337) (Ralstonia eutropha)).